We begin with the raw amino-acid sequence, 347 residues long: L-threonine 3-dehydrogenase (347 aa).

Zn(2+) is bound at residue Cys-42. Active-site charge relay system residues include Thr-44 and His-47. 6 residues coordinate Zn(2+): His-67, Glu-68, Cys-97, Cys-100, Cys-103, and Cys-111. Residues Ile-179, Glu-199, Arg-204, 266–268, and 291–292 contribute to the NAD(+) site; these read LGL and IT.

This sequence belongs to the zinc-containing alcohol dehydrogenase family. Homotetramer. Requires Zn(2+) as cofactor.

The protein resides in the cytoplasm. The enzyme catalyses L-threonine + NAD(+) = (2S)-2-amino-3-oxobutanoate + NADH + H(+). It functions in the pathway amino-acid degradation; L-threonine degradation via oxydo-reductase pathway; glycine from L-threonine: step 1/2. Its function is as follows. Catalyzes the NAD(+)-dependent oxidation of L-threonine to 2-amino-3-ketobutyrate. This is L-threonine 3-dehydrogenase from Caldanaerobacter subterraneus subsp. tengcongensis (strain DSM 15242 / JCM 11007 / NBRC 100824 / MB4) (Thermoanaerobacter tengcongensis).